Here is a 198-residue protein sequence, read N- to C-terminus: Outer-membrane lipoprotein carrier protein (198 aa).

Positions 1–16 (MKKWLVVFFLSASALA) are cleaved as a signal peptide.

The protein belongs to the LolA family. Monomer.

The protein resides in the periplasm. Functionally, participates in the translocation of lipoproteins from the inner membrane to the outer membrane. Only forms a complex with a lipoprotein if the residue after the N-terminal Cys is not an aspartate (The Asp acts as a targeting signal to indicate that the lipoprotein should stay in the inner membrane). The sequence is that of Outer-membrane lipoprotein carrier protein from Vibrio vulnificus (strain YJ016).